The following is a 153-amino-acid chain: Large ribosomal subunit protein bL9 (153 aa).

This sequence belongs to the bacterial ribosomal protein bL9 family.

In terms of biological role, binds to the 23S rRNA. This is Large ribosomal subunit protein bL9 from Mycoplasma mycoides subsp. mycoides SC (strain CCUG 32753 / NCTC 10114 / PG1).